A 581-amino-acid chain; its full sequence is Arginine--tRNA ligase (581 aa).

Positions 126-136 match the 'HIGH' region motif; that stretch reads PNLAKEMHVGH.

The protein belongs to the class-I aminoacyl-tRNA synthetase family. In terms of assembly, monomer.

Its subcellular location is the cytoplasm. The catalysed reaction is tRNA(Arg) + L-arginine + ATP = L-arginyl-tRNA(Arg) + AMP + diphosphate. In Shewanella woodyi (strain ATCC 51908 / MS32), this protein is Arginine--tRNA ligase.